A 254-amino-acid polypeptide reads, in one-letter code: Arginine transport ATP-binding protein ArgV (254 aa).

One can recognise an ABC transporter domain in the interval 6–250; sequence IDAQQVCKNY…PKEQRTKDFL (245 aa). 38-45 is a binding site for ATP; sequence GPSGSGKS.

The protein belongs to the ABC transporter superfamily. In terms of assembly, the complex is probably composed of two ATP-binding proteins (ArgV), two transmembrane proteins (ArgU) and a solute-binding protein (ArgT).

It is found in the cell membrane. The catalysed reaction is a polar amino acid(out) + ATP + H2O = a polar amino acid(in) + ADP + phosphate + H(+). It catalyses the reaction L-arginine(out) + ATP + H2O = L-arginine(in) + ADP + phosphate + H(+). In terms of biological role, part of the ABC transporter complex ArgTUV involved in L-arginine import. May also transport L-citrulline. Probably responsible for energy coupling to the transport system. The protein is Arginine transport ATP-binding protein ArgV of Corynebacterium glutamicum (strain ATCC 13032 / DSM 20300 / JCM 1318 / BCRC 11384 / CCUG 27702 / LMG 3730 / NBRC 12168 / NCIMB 10025 / NRRL B-2784 / 534).